Reading from the N-terminus, the 205-residue chain is Superoxide dismutase [Mn] (205 aa).

Mn(2+) contacts are provided by histidine 30, histidine 78, aspartate 166, and histidine 170.

Belongs to the iron/manganese superoxide dismutase family. In terms of assembly, homodimer. It depends on Mn(2+) as a cofactor.

The catalysed reaction is 2 superoxide + 2 H(+) = H2O2 + O2. Destroys superoxide anion radicals which are normally produced within the cells and which are toxic to biological systems. The polypeptide is Superoxide dismutase [Mn] (sodA) (Chlamydia muridarum (strain MoPn / Nigg)).